Here is a 718-residue protein sequence, read N- to C-terminus: LON peptidase N-terminal domain and RING finger protein 3 (718 aa).

The interval 1-69 is disordered; that stretch reads MESLRTEQML…PGTSTPESKV (69 aa). Polar residues predominate over residues 57-66; the sequence is EQSPGTSTPE. The stretch at 67 to 100 is one TPR 1 repeat; the sequence is SKVLLTQADALASRGRIREALEVYRQLSERQQLV. Residues 158–196 form an RING-type 1 zinc finger; the sequence is CRKCHGFLSDPVSLSCGHTFCKLCLERGRAADRRCALCG. 2 TPR repeats span residues 243 to 276 and 278 to 310; these read ASQL…APND and LLYS…RPMG. The disordered stretch occupies residues 322–413; the sequence is SQEEAAARGD…TDQGDKPALS (92 aa). Positions 339-352 are enriched in basic and acidic residues; the sequence is AKVKGDGQQHHMKD. An RING-type 2 zinc finger spans residues 426 to 464; that stretch reads CALCMRLFYEPVTTPCGHTFCLKCLERCLDHNAKCPLCK. The 210-residue stretch at 505–714 folds into the Lon N-terminal domain; that stretch reads MEELSNLNKN…GIRRVLAFIS (210 aa).

This is LON peptidase N-terminal domain and RING finger protein 3 (LONRF3) from Macaca fascicularis (Crab-eating macaque).